The chain runs to 113 residues: Large ribosomal subunit protein uL22 (113 aa).

This sequence belongs to the universal ribosomal protein uL22 family. As to quaternary structure, part of the 50S ribosomal subunit.

In terms of biological role, this protein binds specifically to 23S rRNA; its binding is stimulated by other ribosomal proteins, e.g. L4, L17, and L20. It is important during the early stages of 50S assembly. It makes multiple contacts with different domains of the 23S rRNA in the assembled 50S subunit and ribosome. The globular domain of the protein is located near the polypeptide exit tunnel on the outside of the subunit, while an extended beta-hairpin is found that lines the wall of the exit tunnel in the center of the 70S ribosome. The sequence is that of Large ribosomal subunit protein uL22 from Pelotomaculum thermopropionicum (strain DSM 13744 / JCM 10971 / SI).